Consider the following 1226-residue polypeptide: uncharacterized protein (1226 aa).

The protein belongs to the Mg-chelatase subunit H family.

This is an uncharacterized protein from Methanocaldococcus jannaschii (strain ATCC 43067 / DSM 2661 / JAL-1 / JCM 10045 / NBRC 100440) (Methanococcus jannaschii).